A 334-amino-acid polypeptide reads, in one-letter code: MTPFDAKRPLQLNDQGQLRHFLSLDGLPRELLTEILDTADSFLEVGARAVKKVPLLRGKTVCNVFFENSTRTRTTFELAAQRLSADVISLNVSTSSTSKGETLFDTLRNLEAMAADMFVVRHSDSGAAHFIAEHVCPDVAVINGGDGRHAHPTQGMLDMLTIRRHKGSFENLSVAIVGDILHSRVARSDMLALKALGCPDIRVIGPKTLIPIGIEQYGVKVYTDLAEGLKDVDVVIMLRLQRERMAGGLLPSEGEFYRLFGLTTARLAGAKPDAIVMHPGPINRGVEIESAVADGKHSVILNQVTYGIAVRMAVLSMAMSGQNAQRQFDQENAQ.

2 residues coordinate carbamoyl phosphate: arginine 71 and threonine 72. Position 99 (lysine 99) interacts with L-aspartate. Residues arginine 121, histidine 151, and glutamine 154 each coordinate carbamoyl phosphate. Arginine 184 and arginine 239 together coordinate L-aspartate. Residues glycine 280 and proline 281 each coordinate carbamoyl phosphate.

Belongs to the aspartate/ornithine carbamoyltransferase superfamily. ATCase family. In terms of assembly, heterododecamer (2C3:3R2) of six catalytic PyrB chains organized as two trimers (C3), and six regulatory PyrI chains organized as three dimers (R2).

The catalysed reaction is carbamoyl phosphate + L-aspartate = N-carbamoyl-L-aspartate + phosphate + H(+). It participates in pyrimidine metabolism; UMP biosynthesis via de novo pathway; (S)-dihydroorotate from bicarbonate: step 2/3. Its function is as follows. Catalyzes the condensation of carbamoyl phosphate and aspartate to form carbamoyl aspartate and inorganic phosphate, the committed step in the de novo pyrimidine nucleotide biosynthesis pathway. This is Aspartate carbamoyltransferase catalytic subunit from Pseudomonas entomophila (strain L48).